Reading from the N-terminus, the 953-residue chain is MGFFVMIRDVSMGFMLLCISALWVLPIQGAGRESFSRNSSSSSLPSSVNVGALFTYDSFIGRAAKLAFVAAIEDINADQSILRGTKLNIVFQDTNCSGFVGTMGALQLMENKVVAAIGPQSSGIGHIISHVANELHVPFLSFAATDPTLSSLQYPYFLRTTQNDYFQMNAITDFVSYFRWREVVAIFVDDEYGRNGISVLGDALAKKRAKISYKAAFPPGADNSSISDLLASVNLMESRIFVVHVNPDSGLNIFSVAKSLGMMGSGYVWITTDWLLTALDSMEPLDPRALDLLQGVVAFRHYTPESDNKRQFKGRWKNLRFKESLKSDDGFNSYALYAYDSVWLVARALDVFFSQGNTVTFSNDPSLRNTNDSGIKLSKLHIFNEGERFLQVILEMNYTGLTGQIEFNSEKNRINPAYDILNIKSTGPLRVGYWSNHTGFSVAPPETLYSKPSNTSAKDQRLNEIIWPGEVIKPPRGWVFPENGKPLKIGVPNRVSYKNYASKDKNPLGVKGFCIDIFEAAIQLLPYPVPRTYILYGDGKKNPSYDNLISEVAANIFDVAVGDVTIITNRTKFVDFTQPFIESGLVVVAPVKGAKSSPWSFLKPFTIEMWAVTGALFLFVGAVIWILEHRFNEEFRGPPRRQIITVFWFSFSTMFFSHRENTVSTLGRFVLLVWLFVVLIINSSYTASLTSILTVQQLTSRIEGMDTLIASNEPIGVQDGTFAWKFLVNELNIAPSRIIPLKDEEEYLSALQRGPRGGGVAAIVDELPYIKALLSNSNCKFRTVGQEFTRTGWGFAFQRDSPLAVDMSTAILQLAEEGKLEKIRKKWLTYDHECTMQISDTENYQISVQSFWGLFLICGVVWFIALTLFCWKVFWQYQRLRPEESDEVQARSEEAGSSRGKSLRAVSFKDLIKVVDKREAEIKEMLKEKSSKKLKDGQSSAENSQSKDHETPQ.

A signal peptide spans 1–29; it reads MGFFVMIRDVSMGFMLLCISALWVLPIQG. Over 30 to 606 the chain is Extracellular; it reads AGRESFSRNS…SPWSFLKPFT (577 aa). Asparagine 38, asparagine 95, asparagine 223, asparagine 371, asparagine 397, asparagine 436, asparagine 454, and asparagine 569 each carry an N-linked (GlcNAc...) asparagine glycan. A helical transmembrane segment spans residues 607–627; sequence IEMWAVTGALFLFVGAVIWIL. At 628-636 the chain is on the cytoplasmic side; that stretch reads EHRFNEEFR. Residues 637-657 traverse the membrane as a helical segment; that stretch reads GPPRRQIITVFWFSFSTMFFS. The Cytoplasmic segment spans residues 658–668; sequence HRENTVSTLGR. The chain crosses the membrane as a helical span at residues 669 to 689; the sequence is FVLLVWLFVVLIINSSYTASL. Residues 690–850 lie on the Extracellular side of the membrane; it reads TSILTVQQLT…TENYQISVQS (161 aa). The chain crosses the membrane as a helical span at residues 851–871; that stretch reads FWGLFLICGVVWFIALTLFCW. Residues 872 to 953 are Cytoplasmic-facing; the sequence is KVFWQYQRLR…SQSKDHETPQ (82 aa). Residues 928-953 form a disordered region; that stretch reads EKSSKKLKDGQSSAENSQSKDHETPQ.

The protein belongs to the glutamate-gated ion channel (TC 1.A.10.1) family. As to quaternary structure, may form heteromers. As to expression, expressed predominantly in roots. Also detected in shoots.

The protein localises to the membrane. Its function is as follows. Glutamate-gated receptor that probably acts as a non-selective cation channel. May be involved in light-signal transduction and calcium homeostasis via the regulation of calcium influx into cells. The sequence is that of Glutamate receptor 3.5 (GLR3.5) from Arabidopsis thaliana (Mouse-ear cress).